The primary structure comprises 354 residues: Biotin synthase (354 aa).

The 225-residue stretch at 41–265 (NEVQISRLLS…IMPHSRVRLS (225 aa)) folds into the Radical SAM core domain. 3 residues coordinate [4Fe-4S] cluster: Cys-56, Cys-60, and Cys-63. [2Fe-2S] cluster is bound by residues Cys-100, Cys-131, Cys-191, and Arg-263.

It belongs to the radical SAM superfamily. Biotin synthase family. Homodimer. Requires [4Fe-4S] cluster as cofactor. It depends on [2Fe-2S] cluster as a cofactor.

The catalysed reaction is (4R,5S)-dethiobiotin + (sulfur carrier)-SH + 2 reduced [2Fe-2S]-[ferredoxin] + 2 S-adenosyl-L-methionine = (sulfur carrier)-H + biotin + 2 5'-deoxyadenosine + 2 L-methionine + 2 oxidized [2Fe-2S]-[ferredoxin]. Its pathway is cofactor biosynthesis; biotin biosynthesis; biotin from 7,8-diaminononanoate: step 2/2. In terms of biological role, catalyzes the conversion of dethiobiotin (DTB) to biotin by the insertion of a sulfur atom into dethiobiotin via a radical-based mechanism. The sequence is that of Biotin synthase from Shewanella sediminis (strain HAW-EB3).